Reading from the N-terminus, the 1708-residue chain is MEEVAAKVEEETVETNVDAVKEDNATIANESRSPESVSAVSVVSNRAASTKKKPVISSNLIKPTASSSLRVSGTTPVTIRRNSTGGVTENLAGTSKVLPKQVSTTASRTDPVRRSLPELRKSSVSSLSAKTVSKPSLSESKKSVPVSPGSRSLTKSTGFSLSKPESSARPAMSVSVSSKRAPSSSVDSSGSRTSSGRLHSTLTSGRTVSKVSSPSAGSSPSVSSSIRSKSFSSPLDRTSNFSGRKKTSTPESRDSRLIILPKVEVKAGDDMRLDLRGHRIRSLTSGGLHLSPNLEFVYLRDNLLSTLEGIEILNRVKVLDLSFNDFKGPGFEPLENCKMLQQLYLAGNQITSLASLPQLPNLEFLSVAQNKLKSLAMASQPRLQVLAASKNKITTLKDFPYLPVLEHLRVEENPLLKISHLEAASILLVGPTLKKFNDRDLSREEVAIAKRYPPQTALCLREGWEFCKSDLAAESTFRFLVERWKDTLPSGYLIKEAHVDRPSEEAPCQCHFGLFQESPTATDQELALKFQWSVADRSLSNFVPILNATKEVYWPKREDIGKILKIECTPVMAETEYPSIFAISSPVQRGKGIPKVVSLELNGELVEGNIIKGQAVVAWCGGTPGKCITSWLRRKWNGSPVVIDGAEDEEYMLSLDDVGSSMVFMYTPVTEGGARGEPQYKYTEFVKAAPPSVSNVRITGDAVEGCVLKGVGDYFGGKEGPSKFEWLRKNKETGELSLISAGTSEYTLTQEDVGTHVTFVYIPANFEGLEGEPVSTSSSVVKPAPPKVTDAKIVGDLRENSKVTVTGTVTGGTEGSSRVQWFKSSCSILEGDNSLEELSTSKVAKSFRIPLGAVGYYIVAKYTPMTPDGECGEPVYVLSERAVETLPPSLNFLSITGDNIEGGILTASYGYIGGHEGKSKYEWHYHKAENDLPGALIPEASGLLQYTITKEAIGKFISFQCIPVRDDGIVGEPRSCMSQERVRPGNPSTVSLHVVGALVEGTMLSAEKEYWGGEEGASVFRWFRTNSDGTPCEIKGATTSSYLLSVGDIGYFISVSYEPVRNDRARGPTAISEIAGPIVAGHPNCQSLEFLGSMIEGQRLSFVASYTGGMKGNCYLEWVRVKNNGVKEILSSDEFLDLSLDDVGESIELIYTPVREDGIEGSPRSIRTDGIAPANPMGLELLIPDCCEKQEVVPHKTYFGGHEGVGEYIWYRTKVKLHGSALTEISYAGEEVVVCCRTLKYTPSLEDVGAYLVLYWIPTRVDGRSGKPVVVITNSPVAPADPEVSNVRVKKLFSDAYSGEGEYFGGHEGPSLFSWYRENDGTIDLIDGANSKTYEVTESDYNCRILFGYTPVRSDSVVGELKMSEPTEIILPEVPKVDMLAFTGKAVQGDVLTAVQVIPKTEIQQLVWSKYKGDIQYQWFRSPESGDKISYEALSSEISCSYKVRFEDIGRCLKCECVVHDVFGRSSELAYAETDPISPGFPRIEKLEIEGQGFHTNLYAVRGNYFGGKEGKSKIQWLRSMVGSPDLISIPGETGRMYEANVDDVGYRLVVVYTPIREDGVQGHPVSASTEPVAVEPDILKEVRQKLETGLVKFEVLCDKDPYPKKIVGEGNLERRMLEMNRKRIKVVKPGSKTSFATTEVRGSYGPPFHVETFRNDQRRLRIVVDSENEVDIVVQSRHLRDVIVLVIRGFAQRFNSTSLNSLLKIDT.

The span at 67–93 (SSLRVSGTTPVTIRRNSTGGVTENLAG) shows a compositional bias: polar residues. Positions 67-255 (SSLRVSGTTP…KTSTPESRDS (189 aa)) are disordered. Positions 110–121 (DPVRRSLPELRK) are enriched in basic and acidic residues. Low complexity predominate over residues 122-134 (SSVSSLSAKTVSK). A compositionally biased stretch (polar residues) spans 149–165 (GSRSLTKSTGFSLSKPE). Residues 173-234 (SVSVSSKRAP…SIRSKSFSSP (62 aa)) are compositionally biased toward low complexity. LRR repeat units follow at residues 267–290 (AGDD…GLHL), 291–315 (SPNL…ILNR), 316–335 (VKVL…EPLE), 337–359 (CKML…LPQL), 360–382 (PNLE…SQPR), 384–402 (QVLA…FPYL), and 403–425 (PVLE…EAAS). 11 A9 repeats span residues 489 to 584 (PSGY…FAIS), 601 to 682 (LNGE…QYKY), 698 to 777 (ITGD…VSTS), 793 to 878 (IVGD…VYVL), 895 to 977 (ITGD…RSCM), 994 to 1073 (VVGA…AISE), 1090 to 1167 (FLGS…RSIR), 1183 to 1272 (IPDC…VVVI), 1287 to 1365 (VRVK…KMSE), 1382 to 1473 (FTGK…AYAE), and 1489 to 1569 (IEGQ…VSAS).

As to quaternary structure, interacts with KCBP. As to expression, strongly expressed in dividing cells, like the meristemic region of the root tip.

It is found in the cytoplasm. The protein localises to the cell cortex. Its subcellular location is the cytoskeleton. The protein resides in the phragmoplast. Functionally, microtubule-associated protein that may be involved in the maturation of cell plates and proper insertion of cross-walls after cytokinesis. This is 187-kDa microtubule-associated protein AIR9 from Arabidopsis thaliana (Mouse-ear cress).